The following is a 300-amino-acid chain: Merozoite surface protein 2 (300 aa).

The N-terminal stretch at 1–20 (MKVIKTLSIINFFIFVTFNI) is a signal peptide. Residues Asn22 and Asn36 are each glycosylated (N-linked (GlcNAc...) asparagine). Positions 44–226 (EESKPPTGAV…EQTESPELQS (183 aa)) are polymorphic region. Residues 51 to 58 (GAVAGSGA) form a 1; inverted repeat. A 7 X 8 AA tandem repeats of G-S-G-A-G-A-V-A region spans residues 51-110 (GAVAGSGAGAGSGAGAVAGSGAGAVAGSGAGAVAGSGAGAVAGSGAGAVAGSGAVAGSGA). A run of 5 repeats spans residues 61–68 (GSGAGAVA), 69–76 (GSGAGAVA), 77–84 (GSGAGAVA), 85–92 (GSGAGAVA), and 93–100 (GSGAGAVA). One copy of the 7; inverted repeat lies at 103 to 110 (GAVAGSGA). A disordered region spans residues 111 to 261 (GNGANPGADA…DSQKECTDGN (151 aa)). Residues 123–148 (SPSTPATTTTTTTTNDAEASTSTSSE) show a composition bias toward low complexity. Basic and acidic residues predominate over residues 149 to 165 (NRNHNNAETNPKGKGEV). 2 stretches are compositionally biased toward polar residues: residues 167–193 (KPNQ…NVPR) and 200–228 (KSPT…QSAP). Asn177 carries N-linked (GlcNAc...) asparagine glycosylation. An N-linked (GlcNAc...) asparagine glycan is attached at Asn249. An intrachain disulfide couples Cys257 to Cys265. 2 N-linked (GlcNAc...) asparagine glycosylation sites follow: Asn273 and Asn274. Asn274 carries GPI-anchor amidated asparagine lipidation. A propeptide spans 275–300 (SSNIASINKFVVLISATLVLSFAIFI) (removed in mature form).

It localises to the cell membrane. In terms of biological role, may play a role in the merozoite attachment to the erythrocyte. In Plasmodium falciparum (isolate imr143), this protein is Merozoite surface protein 2.